A 333-amino-acid polypeptide reads, in one-letter code: Tubulin alpha chain (333 aa).

GTP is bound by residues serine 48, glycine 52, threonine 53, threonine 88, asparagine 115, and asparagine 137.

Belongs to the tubulin family. As to quaternary structure, dimer of alpha and beta chains. A typical microtubule is a hollow water-filled tube with an outer diameter of 25 nm and an inner diameter of 15 nM. Alpha-beta heterodimers associate head-to-tail to form protofilaments running lengthwise along the microtubule wall with the beta-tubulin subunit facing the microtubule plus end conferring a structural polarity. Microtubules usually have 13 protofilaments but different protofilament numbers can be found in some organisms and specialized cells. Mg(2+) serves as cofactor. Undergoes a tyrosination/detyrosination cycle, the cyclic removal and re-addition of a C-terminal tyrosine residue by the enzymes tubulin tyrosine carboxypeptidase (TTCP) and tubulin tyrosine ligase (TTL), respectively.

The protein localises to the cytoplasm. Its subcellular location is the cytoskeleton. It carries out the reaction GTP + H2O = GDP + phosphate + H(+). Its function is as follows. Tubulin is the major constituent of microtubules, a cylinder consisting of laterally associated linear protofilaments composed of alpha- and beta-tubulin heterodimers. Microtubules grow by the addition of GTP-tubulin dimers to the microtubule end, where a stabilizing cap forms. Below the cap, tubulin dimers are in GDP-bound state, owing to GTPase activity of alpha-tubulin. This is Tubulin alpha chain (tuba) from Dictyostelium purpureum (Slime mold).